Here is a 145-residue protein sequence, read N- to C-terminus: Superoxide dismutase [Mn/Fe] (145 aa).

Fe(3+) is bound by residues His-10 and His-64. 2 residues coordinate Mn(2+): His-10 and His-64.

It belongs to the iron/manganese superoxide dismutase family. The cofactor is Mn(2+). Fe(3+) is required as a cofactor.

It catalyses the reaction 2 superoxide + 2 H(+) = H2O2 + O2. Functionally, destroys superoxide anion radicals which are normally produced within the cells and which are toxic to biological systems. Catalyzes the dismutation of superoxide anion radicals into O2 and H2O2 by successive reduction and oxidation of the transition metal ion at the active site. The polypeptide is Superoxide dismutase [Mn/Fe] (sodA) (Streptococcus porcinus).